A 302-amino-acid polypeptide reads, in one-letter code: Glycine--tRNA ligase alpha subunit (302 aa).

Belongs to the class-II aminoacyl-tRNA synthetase family. As to quaternary structure, tetramer of two alpha and two beta subunits.

It is found in the cytoplasm. The catalysed reaction is tRNA(Gly) + glycine + ATP = glycyl-tRNA(Gly) + AMP + diphosphate. The chain is Glycine--tRNA ligase alpha subunit from Enterococcus faecalis (strain ATCC 700802 / V583).